Reading from the N-terminus, the 159-residue chain is Ribosomal RNA large subunit methyltransferase H (159 aa).

Residues Leu-76, Gly-108, and 127–132 (FGLLTL) each bind S-adenosyl-L-methionine.

Belongs to the RNA methyltransferase RlmH family. As to quaternary structure, homodimer.

It localises to the cytoplasm. The enzyme catalyses pseudouridine(1915) in 23S rRNA + S-adenosyl-L-methionine = N(3)-methylpseudouridine(1915) in 23S rRNA + S-adenosyl-L-homocysteine + H(+). Specifically methylates the pseudouridine at position 1915 (m3Psi1915) in 23S rRNA. The protein is Ribosomal RNA large subunit methyltransferase H of Streptococcus pyogenes serotype M18 (strain MGAS8232).